A 242-amino-acid polypeptide reads, in one-letter code: Tryptophan synthase alpha chain (242 aa).

Catalysis depends on proton acceptor residues E31 and D42.

The protein belongs to the TrpA family. Tetramer of two alpha and two beta chains.

It carries out the reaction (1S,2R)-1-C-(indol-3-yl)glycerol 3-phosphate + L-serine = D-glyceraldehyde 3-phosphate + L-tryptophan + H2O. It participates in amino-acid biosynthesis; L-tryptophan biosynthesis; L-tryptophan from chorismate: step 5/5. In terms of biological role, the alpha subunit is responsible for the aldol cleavage of indoleglycerol phosphate to indole and glyceraldehyde 3-phosphate. This chain is Tryptophan synthase alpha chain, found in Staphylococcus aureus (strain bovine RF122 / ET3-1).